The sequence spans 600 residues: UvrABC system protein C (600 aa).

The GIY-YIG domain occupies 15–92 (DKPGCYLMKD…IKKYQPYYNV (78 aa)). Positions 197 to 232 (AQVKQDLTEKMTQASMDLEFERAAEIRDQLKYIEQT) constitute a UVR domain.

Belongs to the UvrC family. As to quaternary structure, interacts with UvrB in an incision complex.

It is found in the cytoplasm. The UvrABC repair system catalyzes the recognition and processing of DNA lesions. UvrC both incises the 5' and 3' sides of the lesion. The N-terminal half is responsible for the 3' incision and the C-terminal half is responsible for the 5' incision. The protein is UvrABC system protein C of Lactobacillus johnsonii (strain CNCM I-12250 / La1 / NCC 533).